A 487-amino-acid polypeptide reads, in one-letter code: Cysteine--tRNA ligase (487 aa).

Cys27 contacts Zn(2+). Positions 29 to 39 (VTVYDLCHIGH) match the 'HIGH' region motif. Residues Cys211, His236, and Glu240 each contribute to the Zn(2+) site. The 'KMSKS' region motif lies at 268–272 (KMSKS). Lys271 is an ATP binding site.

Belongs to the class-I aminoacyl-tRNA synthetase family. As to quaternary structure, monomer. Zn(2+) is required as a cofactor.

Its subcellular location is the cytoplasm. It catalyses the reaction tRNA(Cys) + L-cysteine + ATP = L-cysteinyl-tRNA(Cys) + AMP + diphosphate. The polypeptide is Cysteine--tRNA ligase (Thermodesulfovibrio yellowstonii (strain ATCC 51303 / DSM 11347 / YP87)).